Consider the following 103-residue polypeptide: Sec-independent protein translocase protein TatA (103 aa).

A helical transmembrane segment spans residues 1 to 21; sequence MGNIFSPTHLIIILLLILLLF. Positions 48–103 are disordered; sequence EESIEDKVEMADTSQVINEESQQSQPLSVKRAAIRRKASSDSKGGKASIAKKQRVK. Residues 59 to 74 are compositionally biased toward polar residues; that stretch reads DTSQVINEESQQSQPL.

It belongs to the TatA/E family. In terms of assembly, the Tat system comprises two distinct complexes: a TatABC complex, containing multiple copies of TatA, TatB and TatC subunits, and a separate TatA complex, containing only TatA subunits. Substrates initially bind to the TatABC complex, which probably triggers association of the separate TatA complex to form the active translocon.

Its subcellular location is the cell inner membrane. In terms of biological role, part of the twin-arginine translocation (Tat) system that transports large folded proteins containing a characteristic twin-arginine motif in their signal peptide across membranes. TatA could form the protein-conducting channel of the Tat system. This chain is Sec-independent protein translocase protein TatA, found in Bartonella tribocorum (strain CIP 105476 / IBS 506).